We begin with the raw amino-acid sequence, 233 residues long: MLEKCPIIALDFSDLASVTTFLEHFPKEELLFVKIGMELYYSEGPSIIRYIKSLGHRIFLDLKLHDIPNTVRSSMSVLAKLGIDMTNVHAAGGVEMMKAAREGLGEGPILLAVTQLTSTSQEQMQVDQHINLSVVDSVCHYAQKAQEAGLDGVVASAQEVKQIKKQTNEHFICLTPGIRPPQTNQLDDQKRTMTPEQARIVGADYIVVGRPITKAENPYQAYLDIKEEWNRIK.

Residues aspartate 11, lysine 34, 61–70, threonine 117, arginine 179, glutamine 189, glycine 209, and arginine 210 contribute to the substrate site; that span reads DLKLHDIPNT. Residue lysine 63 is the Proton donor of the active site.

The protein belongs to the OMP decarboxylase family. Type 1 subfamily. In terms of assembly, homodimer.

The enzyme catalyses orotidine 5'-phosphate + H(+) = UMP + CO2. The protein operates within pyrimidine metabolism; UMP biosynthesis via de novo pathway; UMP from orotate: step 2/2. Functionally, catalyzes the decarboxylation of orotidine 5'-monophosphate (OMP) to uridine 5'-monophosphate (UMP). In Streptococcus agalactiae serotype Ia (strain ATCC 27591 / A909 / CDC SS700), this protein is Orotidine 5'-phosphate decarboxylase.